The primary structure comprises 237 residues: MRKLTLAFAAASLLFTLNSAVVARASTPQPLWVGTNVAQLAEQAPIHWVSVAQIENSLLGRPPMAVGFDIDDTVLFSSPGFWRGQKTFSPGSEDYLKNPQFWEKMNNGWDEFSMPKEVARQLIAMHVKRGDSIWFVTGRSQTKTETVSKTLQDDFLIPAANMNPVIFAGDKPGQNTKTQWLQAKQIKVFYGDSDNDITAAREAGARGIRVLRAANSSYKPLPMAGALGEEVIVNSEY.

The first 25 residues, 1 to 25 (MRKLTLAFAAASLLFTLNSAVVARA), serve as a signal peptide directing secretion. Residue aspartate 69 is the Nucleophile of the active site. Mg(2+) is bound by residues aspartate 69 and aspartate 71. The Proton donor role is filled by aspartate 71. Substrate-binding positions include 137–138 (TG) and lysine 177. A Mg(2+)-binding site is contributed by aspartate 192.

The protein belongs to the class B bacterial acid phosphatase family. As to quaternary structure, homotetramer. It depends on Mg(2+) as a cofactor.

The protein resides in the periplasm. The enzyme catalyses a phosphate monoester + H2O = an alcohol + phosphate. Its function is as follows. Dephosphorylates several organic phosphate monoesters. Also has a phosphotransferase activity catalyzing the transfer of low-energy phosphate groups from organic phosphate monoesters to free hydroxyl groups of various organic compounds. This Klebsiella pneumoniae (strain 342) protein is Class B acid phosphatase.